The chain runs to 331 residues: Small ribosomal subunit protein uS2 (331 aa).

Belongs to the universal ribosomal protein uS2 family.

The chain is Small ribosomal subunit protein uS2 from Rhodopseudomonas palustris (strain ATCC BAA-98 / CGA009).